A 670-amino-acid polypeptide reads, in one-letter code: uncharacterized protein (670 aa).

The tract at residues Pro53–Pro83 is disordered. 27 repeat units span residues Ala143–Thr158, Ala171–Thr186, Ala200–Pro214, Ala215–Pro233, Ala234–Pro252, Ala253–Thr268, Thr279–Pro293, Ala294–Thr309, Thr320–Pro334, Ala335–Pro349, Ala362–Pro376, Ala377–Pro391, Ala392–Pro406, Ala407–Pro421, Ala422–Pro436, Ala437–Thr452, Val464–Thr477, Ala478–Thr493, Ala504–Thr517, Ala518–Thr531, Ala532–Thr545, Ala546–Thr559, Ala560–Thr573, Ala574–Thr587, Ala588–Thr601, Ala602–Thr615, and Ala616–Thr629. The interval Pro187–Asn225 is disordered. Over residues Ala205 to Asn225 the composition is skewed to low complexity. Residues Gly339–Thr395 are disordered. Over residues Asp342–Ala362 the composition is skewed to polar residues. Low complexity predominate over residues Met363 to Thr395. Low complexity-rich tracts occupy residues Gly471–Gly482 and Thr490–Thr503. A disordered region spans residues Gly471–Thr503. Positions Gly525–Gly634 are enriched in low complexity. The disordered stretch occupies residues Gly525–Arg670. The span at Gly638 to Gly654 shows a compositional bias: basic residues.

This is an uncharacterized protein from Ictalurid herpesvirus 1 (strain Auburn) (IcHV-1).